A 220-amino-acid chain; its full sequence is Thiamine-phosphate synthase (220 aa).

4-amino-2-methyl-5-(diphosphooxymethyl)pyrimidine contacts are provided by residues 38–42 (QYRDK) and N70. Mg(2+) is bound by residues D71 and D90. Residue T109 coordinates 4-amino-2-methyl-5-(diphosphooxymethyl)pyrimidine. 135 to 137 (TVS) is a binding site for 2-[(2R,5Z)-2-carboxy-4-methylthiazol-5(2H)-ylidene]ethyl phosphate. K138 is a binding site for 4-amino-2-methyl-5-(diphosphooxymethyl)pyrimidine. 2-[(2R,5Z)-2-carboxy-4-methylthiazol-5(2H)-ylidene]ethyl phosphate-binding positions include G171 and 191-192 (IS).

The protein belongs to the thiamine-phosphate synthase family. Mg(2+) serves as cofactor.

The catalysed reaction is 2-[(2R,5Z)-2-carboxy-4-methylthiazol-5(2H)-ylidene]ethyl phosphate + 4-amino-2-methyl-5-(diphosphooxymethyl)pyrimidine + 2 H(+) = thiamine phosphate + CO2 + diphosphate. It carries out the reaction 2-(2-carboxy-4-methylthiazol-5-yl)ethyl phosphate + 4-amino-2-methyl-5-(diphosphooxymethyl)pyrimidine + 2 H(+) = thiamine phosphate + CO2 + diphosphate. The enzyme catalyses 4-methyl-5-(2-phosphooxyethyl)-thiazole + 4-amino-2-methyl-5-(diphosphooxymethyl)pyrimidine + H(+) = thiamine phosphate + diphosphate. The protein operates within cofactor biosynthesis; thiamine diphosphate biosynthesis; thiamine phosphate from 4-amino-2-methyl-5-diphosphomethylpyrimidine and 4-methyl-5-(2-phosphoethyl)-thiazole: step 1/1. In terms of biological role, condenses 4-methyl-5-(beta-hydroxyethyl)thiazole monophosphate (THZ-P) and 2-methyl-4-amino-5-hydroxymethyl pyrimidine pyrophosphate (HMP-PP) to form thiamine monophosphate (TMP). The chain is Thiamine-phosphate synthase from Agrobacterium fabrum (strain C58 / ATCC 33970) (Agrobacterium tumefaciens (strain C58)).